The following is a 527-amino-acid chain: F-box-like/WD repeat-containing protein TBL1X (527 aa).

S2 is modified (N-acetylserine). Residues 4–36 (TSDEVNFLVYRYLQESGFSHSAFTFGIESHISQ) enclose the LisH domain. In terms of domain architecture, F-box-like spans 41 to 86 (GTLVPPAALISILQKGLQYVEAEISINEDGTVFDGRPIESLSLIDA). The residue at position 102 (K102) is an N6-acetyllysine. A disordered region spans residues 127–164 (TTPAAAAQQNPPKNGEATVNGEENGAHAINNHSKPMEI). 8 WD repeats span residues 180-219 (GHES…NGGS), 236-275 (PSNK…ASTL), 277-316 (QHKG…AKQQ), 319-359 (FHSA…KTFQ), 360-399 (GHTN…CVHD), 402-450 (AHSK…CIHT), 453-492 (KHQE…LVHS), and 494-526 (RGTG…LDLR). K290 is covalently cross-linked (Glycyl lysine isopeptide (Lys-Gly) (interchain with G-Cter in SUMO2)).

Belongs to the WD repeat EBI family. As to quaternary structure, homotetramer; dimer of dimers. Component of the N-Cor repressor complex, at least composed of NCOR1, NCOR2, HDAC3, TBL1X, TBL1R, CORO2A and GPS2. Component of a E3 ubiquitin ligase complex containing UBE2D1, SIAH1, CACYBP/SIP, SKP1, APC and TBL1X. Interacts with GPS2 (when sumoylated); leading to protect GPS2 against degradation by the proteasome. Probably part of other corepressor complexes, that do not contain NCOR1 and NCOR2. Interacts with histones H2B, H3a and H4. Interacts with MECP2; recruits TBL1X to the heterochromatin foci. Interacts with USP44. As to expression, expressed in the cochlea.

The protein resides in the nucleus. F-box-like protein involved in the recruitment of the ubiquitin/19S proteasome complex to nuclear receptor-regulated transcription units. Plays an essential role in transcription activation mediated by nuclear receptors. Probably acts as integral component of corepressor complexes that mediates the recruitment of the 19S proteasome complex, leading to the subsequent proteasomal degradation of transcription repressor complexes, thereby allowing cofactor exchange. The chain is F-box-like/WD repeat-containing protein TBL1X (Tbl1x) from Mus musculus (Mouse).